The sequence spans 1030 residues: FACT complex subunit spt-16 (1030 aa).

The stretch at 424–445 forms a coiled coil; sequence RLKSNVIKFKEEQENREAEKDN. Basic and acidic residues-rich tracts occupy residues 435-449 and 464-477; these read EQEN…DQKK and TRNK…RKER. Disordered stretches follow at residues 435-477 and 491-514; these read EQEN…RKER and ARLS…SYKT. The stretch at 623–645 forms a coiled coil; the sequence is RLIKEMQKRFKTEEAEEREKEGA. The interval 927-1030 is disordered; sequence VESDNEEAMD…KSGPSHKRRK (104 aa). Acidic residues-rich tracts occupy residues 929-951 and 958-983; these read SDNE…EEDA and ESDE…DSDE. A coiled-coil region spans residues 987 to 1007; sequence KDWSDLEEEAANADKRREVEE. The segment covering 998-1014 has biased composition (basic and acidic residues); that stretch reads NADKRREVEEPSRDRDR. Basic residues predominate over residues 1015–1030; sequence KRPHSSKSGPSHKRRK.

It belongs to the peptidase M24 family. SPT16 subfamily. Component of the FACT complex, a stable heterodimer of spt-16 and hmg-3 or hmg-4. In terms of tissue distribution, expressed in the germline and somatic cells.

It is found in the nucleus. Its subcellular location is the chromosome. Component of the FACT complex, a general chromatin factor that acts to reorganize nucleosomes. The FACT complex is involved in multiple processes that require DNA as a template such as mRNA elongation, DNA replication and DNA repair. During transcription elongation the FACT complex acts as a histone chaperone that both destabilizes and restores nucleosomal structure. It facilitates the passage of RNA polymerase II and transcription by promoting the dissociation of one histone H2A-H2B dimer from the nucleosome, then subsequently promotes the reestablishment of the nucleosome following the passage of RNA polymerase II. In embryos, promotes cell cycle progression and chromosomal segregation. Plays a role in the development of the anterior pharynx during embryonic development. The protein is FACT complex subunit spt-16 of Caenorhabditis elegans.